The primary structure comprises 229 residues: Ribosomal RNA small subunit methyltransferase G (229 aa).

Residues glycine 71, alanine 122–glutamate 123, and arginine 139 each bind S-adenosyl-L-methionine.

The protein belongs to the methyltransferase superfamily. RNA methyltransferase RsmG family.

It is found in the cytoplasm. Functionally, specifically methylates the N7 position of a guanine in 16S rRNA. This Thermotoga neapolitana (strain ATCC 49049 / DSM 4359 / NBRC 107923 / NS-E) protein is Ribosomal RNA small subunit methyltransferase G.